The sequence spans 541 residues: Glucose-6-phosphate isomerase (541 aa).

Glu-346 functions as the Proton donor in the catalytic mechanism. Residues His-377 and Lys-506 contribute to the active site.

This sequence belongs to the GPI family.

Its subcellular location is the cytoplasm. It catalyses the reaction alpha-D-glucose 6-phosphate = beta-D-fructose 6-phosphate. The protein operates within carbohydrate biosynthesis; gluconeogenesis. It functions in the pathway carbohydrate degradation; glycolysis; D-glyceraldehyde 3-phosphate and glycerone phosphate from D-glucose: step 2/4. Its function is as follows. Catalyzes the reversible isomerization of glucose-6-phosphate to fructose-6-phosphate. The sequence is that of Glucose-6-phosphate isomerase from Rhizobium johnstonii (strain DSM 114642 / LMG 32736 / 3841) (Rhizobium leguminosarum bv. viciae).